The following is a 76-amino-acid chain: UPF0352 protein PC1_1633 (76 aa).

Belongs to the UPF0352 family.

This is UPF0352 protein PC1_1633 from Pectobacterium carotovorum subsp. carotovorum (strain PC1).